The sequence spans 876 residues: Leucine--tRNA ligase (876 aa).

A 'HIGH' region motif is present at residues 43 to 53; the sequence is PYPSGRIHMGH. Residues 632–636 carry the 'KMSKS' region motif; the sequence is KMSKS. K635 contributes to the ATP binding site.

Belongs to the class-I aminoacyl-tRNA synthetase family.

It is found in the cytoplasm. It carries out the reaction tRNA(Leu) + L-leucine + ATP = L-leucyl-tRNA(Leu) + AMP + diphosphate. This chain is Leucine--tRNA ligase, found in Rhodopseudomonas palustris (strain TIE-1).